Here is a 635-residue protein sequence, read N- to C-terminus: 1-deoxy-D-xylulose-5-phosphate synthase (635 aa).

Residues His74 and 115 to 117 (AHS) contribute to the thiamine diphosphate site. Mg(2+) is bound at residue Asp146. Thiamine diphosphate-binding positions include 147-148 (GA), Asn176, Tyr283, and Glu365. Asn176 contacts Mg(2+).

This sequence belongs to the transketolase family. DXPS subfamily. As to quaternary structure, homodimer. It depends on Mg(2+) as a cofactor. Thiamine diphosphate serves as cofactor.

It carries out the reaction D-glyceraldehyde 3-phosphate + pyruvate + H(+) = 1-deoxy-D-xylulose 5-phosphate + CO2. The protein operates within metabolic intermediate biosynthesis; 1-deoxy-D-xylulose 5-phosphate biosynthesis; 1-deoxy-D-xylulose 5-phosphate from D-glyceraldehyde 3-phosphate and pyruvate: step 1/1. Functionally, catalyzes the acyloin condensation reaction between C atoms 2 and 3 of pyruvate and glyceraldehyde 3-phosphate to yield 1-deoxy-D-xylulose-5-phosphate (DXP). The sequence is that of 1-deoxy-D-xylulose-5-phosphate synthase from Polaromonas sp. (strain JS666 / ATCC BAA-500).